Consider the following 144-residue polypeptide: 3-dehydroquinate dehydratase (144 aa).

The active-site Proton acceptor is Y23. Substrate is bound by residues N74, H80, and D87. H101 functions as the Proton donor in the catalytic mechanism. Substrate is bound by residues 102 to 103 (LS) and R112.

It belongs to the type-II 3-dehydroquinase family. As to quaternary structure, homododecamer.

The enzyme catalyses 3-dehydroquinate = 3-dehydroshikimate + H2O. Its pathway is metabolic intermediate biosynthesis; chorismate biosynthesis; chorismate from D-erythrose 4-phosphate and phosphoenolpyruvate: step 3/7. In terms of biological role, catalyzes a trans-dehydration via an enolate intermediate. This Mesorhizobium japonicum (strain LMG 29417 / CECT 9101 / MAFF 303099) (Mesorhizobium loti (strain MAFF 303099)) protein is 3-dehydroquinate dehydratase.